Reading from the N-terminus, the 92-residue chain is UPF0237 protein MA_3235 (92 aa).

Residues 7–81 (IITVIGSDRV…KSLGVEVKVQ (75 aa)) enclose the ACT domain.

This sequence belongs to the UPF0237 family.

The polypeptide is UPF0237 protein MA_3235 (Methanosarcina acetivorans (strain ATCC 35395 / DSM 2834 / JCM 12185 / C2A)).